The following is a 340-amino-acid chain: Spermidine synthase 2 (340 aa).

The interval 1-41 is disordered; sequence MSSTQEASVTDLPVKRPREAEEDNNGGAMETENGGGEIKEP. Ser-2 is subject to N-acetylserine. The region spanning 49 to 286 is the PABS domain; it reads PGWFSEISPM…GVIGFMLCSS (238 aa). Gln-80 is an S-adenosyl 3-(methylsulfanyl)propylamine binding site. Putrescine is bound at residue Tyr-110. S-adenosyl 3-(methylsulfanyl)propylamine contacts are provided by residues Gln-111, Asp-135, Glu-155, 186-187, and Asp-205; that span reads DG. The active-site Proton acceptor is the Asp-205. Putrescine contacts are provided by residues 205 to 208 and Tyr-274; that span reads DSSD.

It belongs to the spermidine/spermine synthase family. As to quaternary structure, heterodimer. Component of a multiprotein complex. Interacts with SPMS and SPDSYN1.

The catalysed reaction is S-adenosyl 3-(methylsulfanyl)propylamine + putrescine = S-methyl-5'-thioadenosine + spermidine + H(+). Its pathway is amine and polyamine biosynthesis; spermidine biosynthesis; spermidine from putrescine: step 1/1. The protein is Spermidine synthase 2 (SPDSYN2) of Arabidopsis thaliana (Mouse-ear cress).